We begin with the raw amino-acid sequence, 299 residues long: Acetylglutamate kinase (299 aa).

Residues 72-73 (GG), Arg-94, and Asn-196 each bind substrate.

Belongs to the acetylglutamate kinase family. ArgB subfamily.

It is found in the cytoplasm. It catalyses the reaction N-acetyl-L-glutamate + ATP = N-acetyl-L-glutamyl 5-phosphate + ADP. The protein operates within amino-acid biosynthesis; L-arginine biosynthesis; N(2)-acetyl-L-ornithine from L-glutamate: step 2/4. In terms of biological role, catalyzes the ATP-dependent phosphorylation of N-acetyl-L-glutamate. The protein is Acetylglutamate kinase of Burkholderia thailandensis (strain ATCC 700388 / DSM 13276 / CCUG 48851 / CIP 106301 / E264).